The chain runs to 339 residues: D-erythrose-4-phosphate dehydrogenase (339 aa).

Arg11–Ile12 is a binding site for NAD(+). Substrate is bound by residues Ser158–Thr160, Arg204, Thr217–Lys218, and Arg240. Cys159 functions as the Nucleophile in the catalytic mechanism. NAD(+) is bound at residue Asn322.

The protein belongs to the glyceraldehyde-3-phosphate dehydrogenase family. Epd subfamily. As to quaternary structure, homotetramer.

The protein resides in the cytoplasm. It carries out the reaction D-erythrose 4-phosphate + NAD(+) + H2O = 4-phospho-D-erythronate + NADH + 2 H(+). The protein operates within cofactor biosynthesis; pyridoxine 5'-phosphate biosynthesis; pyridoxine 5'-phosphate from D-erythrose 4-phosphate: step 1/5. Catalyzes the NAD-dependent conversion of D-erythrose 4-phosphate to 4-phosphoerythronate. In Aliivibrio fischeri (strain ATCC 700601 / ES114) (Vibrio fischeri), this protein is D-erythrose-4-phosphate dehydrogenase.